The chain runs to 576 residues: Homeobox protein invected (576 aa).

5 disordered regions span residues 1–68, 80–102, 305–344, 364–410, and 426–476; these read MSTL…DEQT, EVEE…NSVL, GGSV…LAQS, NSND…GEDS, and SDRP…RPRT. Acidic residues predominate over residues 80 to 91; it reads EVEEEHDLDLED. 3 stretches are compositionally biased toward low complexity: residues 309 to 325, 364 to 381, and 395 to 405; these read SGSS…TNGN, NSND…TNTS, and AGAGATGASGK. The span at 450 to 468 shows a compositional bias: gly residues; the sequence is AGGGGGGVEKGEAADGGGV. Positions 471–530 form a DNA-binding region, homeobox; it reads DKRPRTAFSGTQLARLKHEFNENRYLTEKRRQQLSGELGLNEAQIKIWFQNKRAKLKKSS.

This sequence belongs to the engrailed homeobox family. Expressed in row 6/7 of the embryonic neuroectoderm.

It localises to the nucleus. Its function is as follows. Engrailed (en) and invected (inv) are functionally redundant transcription factors in neuronal precursor cell NB5-3 specification. Inv is unable to substitute for en in other regulatory processes such as maintaining gsb expression in the neuroectoderm after stage 10 of embryogenesis. Maintenance of gsb expression in row 5 of the neuroectoderm involves an as yet unidentified short range signaling molecule. This is Homeobox protein invected (inv) from Drosophila melanogaster (Fruit fly).